Reading from the N-terminus, the 381-residue chain is Lipopolysaccharide 1,2-N-acetylglucosaminetransferase (381 aa).

The protein belongs to the glycosyltransferase group 1 family. Glycosyltransferase 4 subfamily.

The protein localises to the cell inner membrane. It carries out the reaction UDP-N-acetyl-alpha-D-glucosamine + [lipopolysaccharide] = UDP + N-acetyl-alpha-D-glucosaminyl-[lipopolysaccharide].. Its pathway is bacterial outer membrane biogenesis; LPS core biosynthesis. Its function is as follows. Transferase involved in the biosynthesis of the core oligosaccharide region of lipopolysaccharide (LPS). Catalyzes the addition of the terminal N-acetyl-D-glucosamine (GlcNAc) group to the outer-core glucose II, the last step of the lipid A-core oligosaccharide biosynthesis. This chain is Lipopolysaccharide 1,2-N-acetylglucosaminetransferase, found in Salmonella typhimurium (strain LT2 / SGSC1412 / ATCC 700720).